We begin with the raw amino-acid sequence, 141 residues long: Nucleoside diphosphate kinase (141 aa).

6 residues coordinate ATP: Lys-11, Phe-59, Arg-87, Thr-93, Arg-104, and Asn-114. Catalysis depends on His-117, which acts as the Pros-phosphohistidine intermediate.

It belongs to the NDK family. In terms of assembly, homotetramer. Mg(2+) serves as cofactor.

The protein resides in the cytoplasm. It carries out the reaction a 2'-deoxyribonucleoside 5'-diphosphate + ATP = a 2'-deoxyribonucleoside 5'-triphosphate + ADP. The enzyme catalyses a ribonucleoside 5'-diphosphate + ATP = a ribonucleoside 5'-triphosphate + ADP. Functionally, major role in the synthesis of nucleoside triphosphates other than ATP. The ATP gamma phosphate is transferred to the NDP beta phosphate via a ping-pong mechanism, using a phosphorylated active-site intermediate. This is Nucleoside diphosphate kinase from Burkholderia ambifaria (strain MC40-6).